A 345-amino-acid polypeptide reads, in one-letter code: Methylthioribose-1-phosphate isomerase (345 aa).

Residues 44–46 (RGA), arginine 87, and glutamine 194 each bind substrate. Aspartate 235 acts as the Proton donor in catalysis. Substrate is bound at residue 245 to 246 (NK).

The protein belongs to the eIF-2B alpha/beta/delta subunits family. MtnA subfamily.

It carries out the reaction 5-(methylsulfanyl)-alpha-D-ribose 1-phosphate = 5-(methylsulfanyl)-D-ribulose 1-phosphate. The protein operates within amino-acid biosynthesis; L-methionine biosynthesis via salvage pathway; L-methionine from S-methyl-5-thio-alpha-D-ribose 1-phosphate: step 1/6. Its function is as follows. Catalyzes the interconversion of methylthioribose-1-phosphate (MTR-1-P) into methylthioribulose-1-phosphate (MTRu-1-P). This Heliobacterium modesticaldum (strain ATCC 51547 / Ice1) protein is Methylthioribose-1-phosphate isomerase.